The primary structure comprises 386 residues: V-type proton ATPase subunit B 2 (386 aa).

It belongs to the ATPase alpha/beta chains family. As to quaternary structure, V-ATPase is a heteromultimeric enzyme composed of a peripheral catalytic V1 complex (main components: subunits A, B, C, D, E, and F) attached to an integral membrane V0 proton pore complex (main component: the proteolipid protein).

Non-catalytic subunit of the peripheral V1 complex of vacuolar ATPase. V-ATPase is responsible for acidifying a variety of intracellular compartments in eukaryotic cells. This chain is V-type proton ATPase subunit B 2, found in Gossypium hirsutum (Upland cotton).